The sequence spans 1182 residues: Rho GTPase-activating protein 20 (1182 aa).

A disordered region spans residues 1–40 (MEAMSPQQDALGAQPGRSSSLTGMSRIAGGPGTKKKMKTL). Residue Ser-46 is modified to Phosphoserine. Residues 85–185 (TLLIDGPVEL…WLSLLQRYIA (101 aa)) enclose the PH domain. Residues 194-283 (KSIPLKIFAK…TALLTQGSRD (90 aa)) enclose the Ras-associating domain. Positions 365–551 (VSLPDLCEND…FLIENCCRVF (187 aa)) constitute a Rho-GAP domain. Ser-704 and Ser-730 each carry phosphoserine. Disordered stretches follow at residues 745 to 772 (QTQP…KRNT), 803 to 839 (VASY…QKSS), 935 to 955 (SYSS…SSQD), 982 to 1011 (TQRK…GQAS), 1074 to 1101 (LPSC…EGPG), and 1142 to 1182 (SGGQ…GTDI). Polar residues predominate over residues 758 to 772 (KQSSVTGTDVSKRNT). Positions 811–824 (SQDHPRKQAFDADP) are enriched in basic and acidic residues.

GTPase activator for the Rho-type GTPases by converting them to an inactive GDP-bound state. The sequence is that of Rho GTPase-activating protein 20 (Arhgap20) from Mus musculus (Mouse).